A 149-amino-acid chain; its full sequence is Calmodulin-2 (149 aa).

Ala2 carries the post-translational modification N-acetylalanine. 4 consecutive EF-hand domains span residues 8-43, 44-79, 81-116, and 117-149; these read EQIA…LGQN, PTEA…KMKD, DSEE…LGEK, and LTDE…MLAK. Ca(2+) is bound by residues Asp21, Asp23, Asp25, Cys27, Glu32, Asp57, Asp59, Asn61, Thr63, Glu68, Asp94, Asp96, Asn98, Tyr100, and Asp105. Lys116 carries the post-translational modification N6,N6,N6-trimethyllysine. Ca(2+) is bound by residues Asp130, Asp132, Asp134, Gln136, and Glu141.

The protein belongs to the calmodulin family.

Calmodulin mediates the control of a large number of enzymes, ion channels and other proteins by Ca(2+). Among the enzymes to be stimulated by the calmodulin-Ca(2+) complex are a number of protein kinases and phosphatases. The chain is Calmodulin-2 (CAM72) from Petunia hybrida (Petunia).